The following is a 757-amino-acid chain: Dolichyl-diphosphooligosaccharide--protein glycosyltransferase subunit stt-3 (757 aa).

At 1–13 the chain is on the cytoplasmic side; it reads MTSTTAARTASSR. A helical membrane pass occupies residues 14 to 34; that stretch reads VGATTLLTIVVLALAWFVGFA. The Lumenal portion of the chain corresponds to 35–121; it reads SRLFAIVRFE…VHIREVCVFL (87 aa). A DXD motif 1 motif is present at residues 49 to 51; the sequence is EFD. Asp51 serves as a coordination point for Mn(2+). The chain crosses the membrane as a helical span at residues 122 to 140; that stretch reads APTFSGLTAIATYLLTKEL. The Cytoplasmic segment spans residues 141-142; it reads WS. A helical transmembrane segment spans residues 143-160; the sequence is PGAGLFAACFIAISPGYT. Over 161–171 the chain is Lumenal; the sequence is SRSVAGSYDNE. Residues Asp169 and Glu171 each contribute to the Mn(2+) site. Residues 169–171 carry the DXD motif 2 motif; that stretch reads DNE. Residues 172–191 traverse the membrane as a helical segment; sequence GIAIFALQFTYYLWVKSLKT. The Cytoplasmic segment spans residues 192 to 193; sequence GS. The helical transmembrane segment at 194–208 threads the bilayer; it reads IMWASLCALSYFYMV. At 209–210 the chain is on the lumenal side; the sequence is SA. Transmembrane regions (helical) follow at residues 211 to 235 and 236 to 261; these read WGGY…GRYS and SRLF…FVGF. The Lumenal portion of the chain corresponds to 262–269; it reads QPVRTSEH. The helical transmembrane segment at 270-289 threads the bilayer; the sequence is MPAFGVFGLLQIVALMHYAR. Topologically, residues 290 to 299 are cytoplasmic; the sequence is NRITRQQFMT. The chain crosses the membrane as a helical span at residues 300–320; it reads LFVGGLTILGALSVVVYFALV. At 321-358 the chain is on the lumenal side; it reads WGGYVAPFSGRFYSLWDTGYAKIHIPIIASVSEHQPTT. The SVSE motif motif lies at 350–353; it reads SVSE. A helical membrane pass occupies residues 359–381; the sequence is WVSFFFDLHITAAVFPVGLWYCI. The Cytoplasmic portion of the chain corresponds to 382-387; it reads KKVNDE. A helical transmembrane segment spans residues 388 to 404; the sequence is RVFIILYAVSAVYFAGV. The Lumenal portion of the chain corresponds to 405 to 408; that stretch reads MVRL. Arg407 lines the dolichyl diphosphooligosaccharide pocket. Residues 409 to 430 traverse the membrane as a helical segment; sequence MLTLTPAVCVLAGIGFSYTFEK. Residues 431-469 are Cytoplasmic-facing; it reads YLKDEETKERSSSQSGTTKDEKLYDKAAKNVKSRNANDG. The chain crosses the membrane as a helical span at residues 470–495; sequence DESGVSSNVRTIISIILVIFLLMFVV. The Lumenal portion of the chain corresponds to 496-757; the sequence is HATYVTSNAY…IRPAPTASKA (262 aa). The interacts with target acceptor peptide in protein substrate stretch occupies residues 547 to 549; the sequence is WWD. Positions 547 to 551 match the WWDYG motif motif; that stretch reads WWDYG. A dolichyl diphosphooligosaccharide-binding site is contributed by Tyr552. 2 N-linked (GlcNAc...) asparagine glycosylation sites follow: Asn559 and Asn566. Asn570 carries an N-linked (GlcNAc...) (high mannose) asparagine glycan. An N-linked (GlcNAc...) asparagine glycan is attached at Asn584. A DK motif motif is present at residues 614–621; the sequence is DINKFLWM. The tract at residues 721–757 is disordered; that stretch reads RPTVKSEEATIPIKGKKATQGKNKKGVIRPAPTASKA. Residues 734-747 are compositionally biased toward basic residues; it reads KGKKATQGKNKKGV.

The protein belongs to the STT3 family. In terms of assembly, component of the oligosaccharyltransferase (OST) complex. Requires Mg(2+) as cofactor. Mn(2+) serves as cofactor.

It is found in the endoplasmic reticulum membrane. The enzyme catalyses a di-trans,poly-cis-dolichyl diphosphooligosaccharide + L-asparaginyl-[protein] = N(4)-(oligosaccharide-(1-&gt;4)-N-acetyl-beta-D-glucosaminyl-(1-&gt;4)-N-acetyl-beta-D-glucosaminyl)-L-asparaginyl-[protein] + a di-trans,poly-cis-dolichyl diphosphate + H(+). It functions in the pathway protein modification; protein glycosylation. Its function is as follows. Catalytic subunit of the oligosaccharyl transferase (OST) complex that catalyzes the initial transfer of a defined glycan (Glc(3)Man(9)GlcNAc(2) in eukaryotes) from the lipid carrier dolichol-pyrophosphate to an asparagine residue within an Asn-X-Ser/Thr consensus motif in nascent polypeptide chains, the first step in protein N-glycosylation. N-glycosylation occurs cotranslationally and the complex associates with the Sec61 complex at the channel-forming translocon complex that mediates protein translocation across the endoplasmic reticulum (ER). All subunits are required for a maximal enzyme activity. This subunit contains the active site and the acceptor peptide and donor lipid-linked oligosaccharide (LLO) binding pockets. The protein is Dolichyl-diphosphooligosaccharide--protein glycosyltransferase subunit stt-3 of Caenorhabditis elegans.